The chain runs to 55 residues: Large ribosomal subunit protein bL33 (55 aa).

The protein belongs to the bacterial ribosomal protein bL33 family.

The sequence is that of Large ribosomal subunit protein bL33 from Erythrobacter litoralis (strain HTCC2594).